The following is a 570-amino-acid chain: MSSEKVLVGEYLFTRLLQLGIKSILGVPGDFNLALLDLIEKVGDETFRWVGNENELNGAYAADAYARVKGISAIVTTFGVGELSALNGFAGAYSERIPVVHIVGVPNTKAQATRPLLHHTLGNGDFKVFQRMSSELSADVAFLDSGDSAGRLIDNLLETCVRTSRPVYLAVPSDAGYFYTDASPLKTPLVFPVPENNKEIEHEVVSEILELIEKSKNPSILVDACVSRFHIQQETQDFIDATHFPTYVTPMGKTAINESSPYFDGVYIGSLTEPSIKERAESTDLLLIIGGLRSDFNSGTFTYATPASQTIEFHSDYTKIRSGVYEGISMKHLLPKLTAAIDKKSVQAKARPVHFEPPKAVAAEGYAEGTITHKWFWPTFASFLRESDVVTTETGTSNFGILDCIFPKGCQNLSQVLWGSIGWSVGAMFGATLGIKDSDAPHRRSILIVGDGSLHLTVQEISATIRNGLTPIIFVINNKGYTIERLIHGLHAVYNDINTEWDYQNLLKGYGAKNSRSYNIHSEKELLDLFKDEEFGKADVIQLVEVHMPVLDAPRVLIEQAKLTASLNKQ.

Residues Asp30 and His119 each coordinate pyruvate. Residues Thr396 and 419–421 (GSI) each bind thiamine diphosphate. Asp451 is a binding site for Mg(2+). Residues 452 to 453 (GS) and 478 to 483 (NKGYTI) each bind thiamine diphosphate. 2 residues coordinate Mg(2+): Asn478 and Gly480. Residue Glu484 participates in pyruvate binding.

This sequence belongs to the TPP enzyme family. Homotetramer. Mg(2+) is required as a cofactor. It depends on thiamine diphosphate as a cofactor.

Its subcellular location is the cytoplasm. It localises to the nucleus. The catalysed reaction is a 2-oxocarboxylate + H(+) = an aldehyde + CO2. It carries out the reaction pyruvate + H(+) = acetaldehyde + CO2. This chain is Putative pyruvate decarboxylase C3G9.11c, found in Schizosaccharomyces pombe (strain 972 / ATCC 24843) (Fission yeast).